Here is a 345-residue protein sequence, read N- to C-terminus: Phosphoribosylformylglycinamidine cyclo-ligase (345 aa).

The protein belongs to the AIR synthase family.

The protein localises to the cytoplasm. It carries out the reaction 2-formamido-N(1)-(5-O-phospho-beta-D-ribosyl)acetamidine + ATP = 5-amino-1-(5-phospho-beta-D-ribosyl)imidazole + ADP + phosphate + H(+). It functions in the pathway purine metabolism; IMP biosynthesis via de novo pathway; 5-amino-1-(5-phospho-D-ribosyl)imidazole from N(2)-formyl-N(1)-(5-phospho-D-ribosyl)glycinamide: step 2/2. This is Phosphoribosylformylglycinamidine cyclo-ligase from Shewanella sediminis (strain HAW-EB3).